A 345-amino-acid chain; its full sequence is MTQAGTRSTNGDTENTDILAQARQQVLERGEGLSRDQVLQMLWLPDDRLEELLALAHDVRMRWCGPEVEIEGIISLKTGGCPEDCHFCSQSGLFMSPVRSAWLDIRSLVEAAKQTAKSGATEFCIVAAVRGPDERLMSQVAAGIEAIRNEVEINIACSLGMLTVEQVEQLSGIGVHRYNHNLETARSFFTNVVTTHTWEERWQTLSMVRDAGMEVCCGGILGMGETVEQRAEFALELAELGPDEVPLNFLNPRPGTPFGALEVMPPSEALKSVAAFRLALPRTILRFAGGREITLGDLGAKQGMLGGINAVIVGNYLTTLGRPAEADLRLLDDLQMPIKALNASL.

The Radical SAM core domain maps to 66–291 (PEVEIEGIIS…RTILRFAGGR (226 aa)). [4Fe-4S] cluster is bound by residues Cys-81, Cys-85, and Cys-88. [2Fe-2S] cluster-binding residues include Cys-124, Cys-157, Cys-216, and Arg-286.

The protein belongs to the radical SAM superfamily. Biotin synthase family. In terms of assembly, homodimer. It depends on [4Fe-4S] cluster as a cofactor. [2Fe-2S] cluster is required as a cofactor.

The catalysed reaction is (4R,5S)-dethiobiotin + (sulfur carrier)-SH + 2 reduced [2Fe-2S]-[ferredoxin] + 2 S-adenosyl-L-methionine = (sulfur carrier)-H + biotin + 2 5'-deoxyadenosine + 2 L-methionine + 2 oxidized [2Fe-2S]-[ferredoxin]. Its pathway is cofactor biosynthesis; biotin biosynthesis; biotin from 7,8-diaminononanoate: step 2/2. Its function is as follows. Catalyzes the conversion of dethiobiotin (DTB) to biotin by the insertion of a sulfur atom into dethiobiotin via a radical-based mechanism. This chain is Biotin synthase, found in Mycobacterium leprae (strain Br4923).